Consider the following 332-residue polypeptide: Ferredoxin--NADP reductase 2 (332 aa).

FAD contacts are provided by E37, Q45, Y50, V90, F124, D285, and T326.

Belongs to the ferredoxin--NADP reductase type 2 family. In terms of assembly, homodimer. The cofactor is FAD.

The catalysed reaction is 2 reduced [2Fe-2S]-[ferredoxin] + NADP(+) + H(+) = 2 oxidized [2Fe-2S]-[ferredoxin] + NADPH. This Bacillus subtilis (strain 168) protein is Ferredoxin--NADP reductase 2 (yumC).